The sequence spans 267 residues: Tryptophan synthase alpha chain (267 aa).

Active-site proton acceptor residues include Glu-47 and Asp-58.

It belongs to the TrpA family. Tetramer of two alpha and two beta chains.

The enzyme catalyses (1S,2R)-1-C-(indol-3-yl)glycerol 3-phosphate + L-serine = D-glyceraldehyde 3-phosphate + L-tryptophan + H2O. It participates in amino-acid biosynthesis; L-tryptophan biosynthesis; L-tryptophan from chorismate: step 5/5. In terms of biological role, the alpha subunit is responsible for the aldol cleavage of indoleglycerol phosphate to indole and glyceraldehyde 3-phosphate. In Chlorobaculum tepidum (strain ATCC 49652 / DSM 12025 / NBRC 103806 / TLS) (Chlorobium tepidum), this protein is Tryptophan synthase alpha chain.